We begin with the raw amino-acid sequence, 217 residues long: Glycerol-3-phosphate acyltransferase (217 aa).

A run of 6 helical transmembrane segments spans residues 3–23, 56–76, 78–98, 120–140, 142–162, and 163–183; these read IVILLLVAYLLGSIPSGVWIG, VLLMDILKGTLATSLPYLFGL, GVNPLFFGVAAVLGHTFPIFA, FFIYSALIFVICLYLTSMVSL, SMISAVLITLSTIILPFTVPA, and ILPTFNWLLTVIAIALTTFIF.

The protein belongs to the PlsY family. Probably interacts with PlsX.

It is found in the cell membrane. The enzyme catalyses an acyl phosphate + sn-glycerol 3-phosphate = a 1-acyl-sn-glycero-3-phosphate + phosphate. The protein operates within lipid metabolism; phospholipid metabolism. Functionally, catalyzes the transfer of an acyl group from acyl-phosphate (acyl-PO(4)) to glycerol-3-phosphate (G3P) to form lysophosphatidic acid (LPA). This enzyme utilizes acyl-phosphate as fatty acyl donor, but not acyl-CoA or acyl-ACP. The sequence is that of Glycerol-3-phosphate acyltransferase from Enterococcus faecalis (strain ATCC 700802 / V583).